The primary structure comprises 26 residues: Acetyl-CoA acetyltransferase (26 aa).

Cys21 serves as the catalytic Acyl-thioester intermediate.

Belongs to the thiolase-like superfamily. Thiolase family. Homotetramer. In terms of processing, succinylation, adjacent to a coenzyme A binding site. Desuccinylated by SIRT5.

The protein resides in the mitochondrion. It carries out the reaction 2 acetyl-CoA = acetoacetyl-CoA + CoA. This chain is Acetyl-CoA acetyltransferase, found in Sus scrofa (Pig).